A 215-amino-acid polypeptide reads, in one-letter code: Protein-L-isoaspartate O-methyltransferase (215 aa).

Residue Ser62 is part of the active site.

Belongs to the methyltransferase superfamily. L-isoaspartyl/D-aspartyl protein methyltransferase family.

The protein resides in the cytoplasm. It catalyses the reaction [protein]-L-isoaspartate + S-adenosyl-L-methionine = [protein]-L-isoaspartate alpha-methyl ester + S-adenosyl-L-homocysteine. Catalyzes the methyl esterification of L-isoaspartyl residues in peptides and proteins that result from spontaneous decomposition of normal L-aspartyl and L-asparaginyl residues. It plays a role in the repair and/or degradation of damaged proteins. The chain is Protein-L-isoaspartate O-methyltransferase from Bradyrhizobium sp. (strain BTAi1 / ATCC BAA-1182).